Consider the following 488-residue polypeptide: H2.0-like homeobox protein (488 aa).

2 disordered regions span residues alanine 118 to aspartate 173 and tryptophan 331 to leucine 488. Low complexity-rich tracts occupy residues glutamine 125–glutamine 135 and proline 158–serine 171. The segment at residues arginine 276–lysine 335 is a DNA-binding region (homeobox). 2 stretches are compositionally biased toward basic and acidic residues: residues serine 334–glutamate 349 and aspartate 363–glycine 372. Positions glutamate 373–serine 383 are enriched in acidic residues. Over residues aspartate 390–leucine 401 the composition is skewed to basic and acidic residues. A compositionally biased stretch (gly residues) spans glycine 422 to asparagine 432. Over residues serine 433–serine 454 the composition is skewed to low complexity.

This sequence belongs to the H2.0 homeobox family. In terms of tissue distribution, low level in normal B and T-cells, high level in activated lymphocytes and monocytes. Also found in thymus, tonsil, bone marrow, developing vessels, and fetal brain.

Its subcellular location is the nucleus. Functionally, transcription factor required for TBX21/T-bet-dependent maturation of Th1 cells as well as maintenance of Th1-specific gene expression. Involved in embryogenesis and hematopoiesis. This chain is H2.0-like homeobox protein (HLX), found in Homo sapiens (Human).